A 407-amino-acid polypeptide reads, in one-letter code: MIHQPPAGARDLLPLEVVQKAWINDRLQQVFGGWGYQRIVTSTIEWLETLMAGGAIQHSTVIQLQDNSAGQLGLRPELTASIARAAVTRMADTTYPQRLCYRANVFRNPPSGHHGKQLEFYQAGVELLFAGGILADAEILLLVADCLEQLGIPQWQLLIGEAGVTRSLLSPFPDPLKSQVCHCLAQLDYVTLENLDYPSSHLKERAQLLFDLRGNATEVLEKVAKLELDKAGEESINNLKSLMRLINDSRSKPLPLTLDLSVIQTFDYYTGIVFKAVGKTDNQLHILGQGGRYDQLLGVYHPKGQSAPGIGFSFNVEDLYACLLNTSILPQLAPSIDWLIIPQTDEARSTAFQYAQNLRDSGKNLRVAIDLGGRSEAEIREYVQQNRVQQLAWIPEKGEPIIEVIFS.

It belongs to the class-II aminoacyl-tRNA synthetase family. HisZ subfamily. As to quaternary structure, heteromultimer composed of HisG and HisZ subunits.

The protein localises to the cytoplasm. The protein operates within amino-acid biosynthesis; L-histidine biosynthesis; L-histidine from 5-phospho-alpha-D-ribose 1-diphosphate: step 1/9. Its function is as follows. Required for the first step of histidine biosynthesis. May allow the feedback regulation of ATP phosphoribosyltransferase activity by histidine. This chain is ATP phosphoribosyltransferase regulatory subunit, found in Rippkaea orientalis (strain PCC 8801 / RF-1) (Cyanothece sp. (strain PCC 8801)).